The following is a 329-amino-acid chain: IDS-like terpene synthase 1 (329 aa).

Residues Asp-79 and Asp-83 each contribute to the Mg(2+) site.

The protein belongs to the FPP/GGPP synthase family. Mg(2+) is required as a cofactor.

The enzyme catalyses (2E)-geranyl diphosphate + H2O = linalool + diphosphate. It carries out the reaction (2E,6E)-farnesyl diphosphate + H2O = (6E)-nerolidol + diphosphate. In terms of biological role, terpene synthase that shows monoterpene synthase activity and produces linalool, using geranyl diphosphate (GPP) as substrate. Also shows sesquiterpene synthase activity as it is able to convert farnesyl diphosphate (FPP) into (E)-nerolidol. This chain is IDS-like terpene synthase 1, found in Melampsora lini (Rust fungus).